The chain runs to 367 residues: DNA replication and repair protein RecF (367 aa).

Position 30-37 (30-37 (GANGSGKT)) interacts with ATP.

It belongs to the RecF family.

The protein resides in the cytoplasm. Its function is as follows. The RecF protein is involved in DNA metabolism; it is required for DNA replication and normal SOS inducibility. RecF binds preferentially to single-stranded, linear DNA. It also seems to bind ATP. This is DNA replication and repair protein RecF from Pseudomonas putida (strain GB-1).